The following is a 379-amino-acid chain: Subtilisin Carlsberg (379 aa).

Residues 1-29 (MMRKKSFWLGMLTAFMLVFTMAFSDSASA) form the signal peptide. Positions 30–105 (AQPAKNVEKD…VEEDHVAHAL (76 aa)) are excised as a propeptide. In terms of domain architecture, Inhibitor I9 spans 44-102 (FKSGVKTASVKKDIIKESGGKVDKQFRIINAAKAKLDKEALKEVKNDPDVAYVEEDHVA). A Ca(2+)-binding site is contributed by Q107. One can recognise a Peptidase S8 domain in the interval 110–378 (PYGIPLIKAD…KGLINVEAAA (269 aa)). D137 (charge relay system) is an active-site residue. A Ca(2+)-binding site is contributed by D146. The active-site Charge relay system is the H168. 7 residues coordinate Ca(2+): L179, N181, T183, V185, A273, Y275, and V278. S325 acts as the Charge relay system in catalysis.

It belongs to the peptidase S8 family. Requires Ca(2+) as cofactor.

The protein localises to the secreted. The catalysed reaction is Hydrolysis of proteins with broad specificity for peptide bonds, and a preference for a large uncharged residue in P1. Hydrolyzes peptide amides.. Inhibited by p-chlorophenyl and 1-naphthyl boronic acid derivatives. Subtilisin is an extracellular alkaline serine protease, it catalyzes the hydrolysis of proteins and peptide amides. Shows high specificity for aromatic and hydrophobic amino acids in the P1 substrate position. May play an important role in the degradation of feather keratin. The polypeptide is Subtilisin Carlsberg (Bacillus licheniformis).